We begin with the raw amino-acid sequence, 291 residues long: Proteasomal ubiquitin receptor ADRM1 homolog rpn1301 (291 aa).

The 114-residue stretch at 1–114 folds into the Pru domain; the sequence is MSLITFKAGK…ERINSYIKDQ (114 aa). Positions 135-162 are disordered; sequence TVEQSEPIAQPTESSKESSEIGAPNSDE. Residues 178–290 enclose the DEUBAD domain; the sequence is AQAGFGGSTV…ARFVSRNNGS (113 aa).

Belongs to the ADRM1 family. In terms of assembly, component of the 19S proteasome regulatory particle complex. The 2 S.pombe rpn13 homologs, rpn1301 and rpn1302 are present at a 0.2-1 ratio.

It is found in the cytoplasm. Its subcellular location is the nucleus. Component of the 26S proteasome, a multiprotein complex involved in the ATP-dependent degradation of ubiquitinated proteins. This complex plays a key role in the maintenance of protein homeostasis by removing misfolded or damaged proteins, which could impair cellular functions, and by removing proteins whose functions are no longer required. Therefore, the proteasome participates in numerous cellular processes, including cell cycle progression, apoptosis, or DNA damage repair. Within the complex, functions as a proteasomal ubiquitin receptor. This Schizosaccharomyces pombe (strain 972 / ATCC 24843) (Fission yeast) protein is Proteasomal ubiquitin receptor ADRM1 homolog rpn1301 (rpn1301).